The following is a 777-amino-acid chain: C6 finger domain transcription factor adaR (777 aa).

Residues 1–20 (MEQRSSPARSLPPRKTTTTP) are disordered. A DNA-binding region (zn(2)-C6 fungal-type) is located at residues 24–50 (CELCRKRKVKCDKLTPCTNCAASGTVC). Disordered stretches follow at residues 61–85 (GRHATRPRRVSSPPPTSAPGETDRI), 111–144 (NSHSHTRTPSATSREQSVQLSDTSTFQTAPNPNT), 182–213 (SSLAGGQEGPIPSSDSAKSEPPNDDGIQVLGL), 419–440 (PQHINDSDFDPTTAAHSDPNRE), 468–496 (RKVDGGIPTPTSSTSGTSTSRSRTCDPSW), and 655–699 (LPPS…PTGS). Low complexity predominate over residues 475–489 (PTPTSSTSGTSTSRS). The segment covering 668–677 (ATPPTFPGVP) has biased composition (pro residues).

The protein localises to the nucleus. Functionally, transcription factor that specifically regulates the expression of the ada gene cluster involved in the biosynthesis of the linear tetracyclic TAN-1612 neuropeptide Y receptor antagonist. The sequence is that of C6 finger domain transcription factor adaR from Aspergillus niger (strain ATCC MYA-4892 / CBS 513.88 / FGSC A1513).